The chain runs to 198 residues: Probable septum site-determining protein MinC (198 aa).

This sequence belongs to the MinC family. In terms of assembly, interacts with MinD and FtsZ.

Functionally, cell division inhibitor that blocks the formation of polar Z ring septums. Rapidly oscillates between the poles of the cell to destabilize FtsZ filaments that have formed before they mature into polar Z rings. Prevents FtsZ polymerization. This chain is Probable septum site-determining protein MinC, found in Thermosipho melanesiensis (strain DSM 12029 / CIP 104789 / BI429).